The primary structure comprises 387 residues: F-box protein DOR (387 aa).

An F-box domain is found at 19 to 64 (DENFEPIPIDLVIEIFSRSPVKSIARCRCVSKLWASILRLPYFTEL).

Part of a SCF (ASK-cullin-F-box) protein ligase complex. Interacts with ASK14 and CUL1. Strongly expressed in guard cells. Mostly represented in seedlings, leaves and flowers, and, to a lower extent, in roots and siliques.

The protein operates within protein modification; protein ubiquitination. Component of SCF(ASK-cullin-F-box) E3 ubiquitin ligase complexes, which may mediate the ubiquitination and subsequent proteasomal degradation of target proteins. Negative regulator of guard cell abscisic acid (ABA) signaling, especially during drought stress. The sequence is that of F-box protein DOR (DOR) from Arabidopsis thaliana (Mouse-ear cress).